Consider the following 101-residue polypeptide: Small ribosomal subunit protein uS14 (101 aa).

Belongs to the universal ribosomal protein uS14 family. As to quaternary structure, part of the 30S ribosomal subunit. Contacts proteins S3 and S10.

In terms of biological role, binds 16S rRNA, required for the assembly of 30S particles and may also be responsible for determining the conformation of the 16S rRNA at the A site. In Paraburkholderia phymatum (strain DSM 17167 / CIP 108236 / LMG 21445 / STM815) (Burkholderia phymatum), this protein is Small ribosomal subunit protein uS14.